The chain runs to 232 residues: Phosphatidylserine decarboxylase proenzyme (232 aa).

The active-site Schiff-base intermediate with substrate; via pyruvic acid is Ser190. Residue Ser190 is modified to Pyruvic acid (Ser); by autocatalysis.

The protein belongs to the phosphatidylserine decarboxylase family. PSD-A subfamily. In terms of assembly, heterodimer of a large membrane-associated beta subunit and a small pyruvoyl-containing alpha subunit. Requires pyruvate as cofactor. Post-translationally, is synthesized initially as an inactive proenzyme. Formation of the active enzyme involves a self-maturation process in which the active site pyruvoyl group is generated from an internal serine residue via an autocatalytic post-translational modification. Two non-identical subunits are generated from the proenzyme in this reaction, and the pyruvate is formed at the N-terminus of the alpha chain, which is derived from the carboxyl end of the proenzyme. The post-translation cleavage follows an unusual pathway, termed non-hydrolytic serinolysis, in which the side chain hydroxyl group of the serine supplies its oxygen atom to form the C-terminus of the beta chain, while the remainder of the serine residue undergoes an oxidative deamination to produce ammonia and the pyruvoyl prosthetic group on the alpha chain.

Its subcellular location is the cell membrane. It carries out the reaction a 1,2-diacyl-sn-glycero-3-phospho-L-serine + H(+) = a 1,2-diacyl-sn-glycero-3-phosphoethanolamine + CO2. It participates in phospholipid metabolism; phosphatidylethanolamine biosynthesis; phosphatidylethanolamine from CDP-diacylglycerol: step 2/2. Its function is as follows. Catalyzes the formation of phosphatidylethanolamine (PtdEtn) from phosphatidylserine (PtdSer). The polypeptide is Phosphatidylserine decarboxylase proenzyme (Rhodopseudomonas palustris (strain HaA2)).